Reading from the N-terminus, the 515-residue chain is Fatty acyl-CoA reductase 1 (515 aa).

The Cytoplasmic segment spans residues 1 to 465 (MVSIPEYYEG…ARKHLNKLRN (465 aa)). Residues 451 to 507 (SGLPAARKHLNKLRNIRYGFNTILVILIWRIFIARSQMARNIWYFVVSLCYKFLSYF) are necessary and sufficient for PEX19-mediated localization into peroxisome membrane. The chain crosses the membrane as a helical span at residues 466–483 (IRYGFNTILVILIWRIFI). The Peroxisomal segment spans residues 484 to 515 (ARSQMARNIWYFVVSLCYKFLSYFRASSTMRY).

This sequence belongs to the fatty acyl-CoA reductase family. As to quaternary structure, interacts with PEX19; PEX19 mediates the targeting of FAR1 to peroxisomes.

It localises to the peroxisome membrane. The catalysed reaction is a long-chain fatty acyl-CoA + 2 NADPH + 2 H(+) = a long-chain primary fatty alcohol + 2 NADP(+) + CoA. The enzyme catalyses hexadecanoyl-CoA + 2 NADPH + 2 H(+) = hexadecan-1-ol + 2 NADP(+) + CoA. It catalyses the reaction octadecanoyl-CoA + 2 NADPH + 2 H(+) = octadecan-1-ol + 2 NADP(+) + CoA. It carries out the reaction (9Z)-octadecenoyl-CoA + 2 NADPH + 2 H(+) = (9Z)-octadecen-1-ol + 2 NADP(+) + CoA. The catalysed reaction is (9Z,12Z)-octadecadienoyl-CoA + 2 NADPH + 2 H(+) = (9Z,12Z)-octadecadien-1-ol + 2 NADP(+) + CoA. The enzyme catalyses eicosanoyl-CoA + 2 NADPH + 2 H(+) = eicosan-1-ol + 2 NADP(+) + CoA. It catalyses the reaction 16-methylheptadecanoyl-CoA + 2 NADPH + 2 H(+) = 16-methylheptadecan-1-ol + 2 NADP(+) + CoA. It carries out the reaction 18-methylnonadecanoyl-CoA + 2 NADPH + 2 H(+) = 18-methylnonadecan-1-ol + 2 NADP(+) + CoA. Its function is as follows. Catalyzes the reduction of saturated and unsaturated C16 or C18 fatty acyl-CoA to fatty alcohols. It plays an essential role in the production of ether lipids/plasmalogens which synthesis requires fatty alcohols. In parallel, it is also required for wax monoesters production since fatty alcohols also constitute a substrate for their synthesis. Catalyzes the reduction of saturated and unsaturated C16 or C18 fatty acyl-CoA to fatty alcohols. It plays an essential role in the production of ether lipids/plasmalogens which synthesis requires fatty alcohols. In parallel, it is also required for wax monoesters production since fatty alcohols also constitute a substrate for their synthesis. This Rattus norvegicus (Rat) protein is Fatty acyl-CoA reductase 1.